Reading from the N-terminus, the 286-residue chain is Formamidopyrimidine-DNA glycosylase (286 aa).

P2 serves as the catalytic Schiff-base intermediate with DNA. E3 acts as the Proton donor in catalysis. The active-site Proton donor; for beta-elimination activity is K61. Residues H103, R122, and R164 each coordinate DNA. The FPG-type zinc finger occupies 250–284; the sequence is NAYAQTGEPCGRCGTLIIRESFMNRGSHYCPNCQK. Residue R274 is the Proton donor; for delta-elimination activity of the active site.

Belongs to the FPG family. As to quaternary structure, monomer. Zn(2+) is required as a cofactor.

It carries out the reaction Hydrolysis of DNA containing ring-opened 7-methylguanine residues, releasing 2,6-diamino-4-hydroxy-5-(N-methyl)formamidopyrimidine.. The catalysed reaction is 2'-deoxyribonucleotide-(2'-deoxyribose 5'-phosphate)-2'-deoxyribonucleotide-DNA = a 3'-end 2'-deoxyribonucleotide-(2,3-dehydro-2,3-deoxyribose 5'-phosphate)-DNA + a 5'-end 5'-phospho-2'-deoxyribonucleoside-DNA + H(+). Involved in base excision repair of DNA damaged by oxidation or by mutagenic agents. Acts as a DNA glycosylase that recognizes and removes damaged bases. Has a preference for oxidized purines, such as 7,8-dihydro-8-oxoguanine (8-oxoG). Has AP (apurinic/apyrimidinic) lyase activity and introduces nicks in the DNA strand. Cleaves the DNA backbone by beta-delta elimination to generate a single-strand break at the site of the removed base with both 3'- and 5'-phosphates. The polypeptide is Formamidopyrimidine-DNA glycosylase (Corynebacterium glutamicum (strain ATCC 13032 / DSM 20300 / JCM 1318 / BCRC 11384 / CCUG 27702 / LMG 3730 / NBRC 12168 / NCIMB 10025 / NRRL B-2784 / 534)).